The following is a 541-amino-acid chain: Cytochrome P450 67 (541 aa).

Residue C479 coordinates heme.

It belongs to the cytochrome P450 family. The cofactor is heme.

The polypeptide is Cytochrome P450 67 (CYP67) (Uromyces fabae (Rust fungus)).